The following is an 87-amino-acid chain: UPF0512 protein B (87 aa).

The protein belongs to the UPF0512 family.

The polypeptide is UPF0512 protein B (Dictyostelium discoideum (Social amoeba)).